Reading from the N-terminus, the 372-residue chain is Queuine tRNA-ribosyltransferase (372 aa).

Catalysis depends on Asp-89, which acts as the Proton acceptor. Substrate-binding positions include 89-93 (DSGGF), Asp-161, and Gly-232. The segment at 262–268 (GIGDLPS) is RNA binding. Asp-281 (nucleophile) is an active-site residue. Residues 286-290 (TKAAR) form an RNA binding; important for wobble base 34 recognition region. Zn(2+) is bound by residues Cys-319, Cys-321, Cys-324, and His-351.

Belongs to the queuine tRNA-ribosyltransferase family. In terms of assembly, homodimer. Within each dimer, one monomer is responsible for RNA recognition and catalysis, while the other monomer binds to the replacement base PreQ1. The cofactor is Zn(2+).

It carries out the reaction 7-aminomethyl-7-carbaguanine + guanosine(34) in tRNA = 7-aminomethyl-7-carbaguanosine(34) in tRNA + guanine. It participates in tRNA modification; tRNA-queuosine biosynthesis. In terms of biological role, catalyzes the base-exchange of a guanine (G) residue with the queuine precursor 7-aminomethyl-7-deazaguanine (PreQ1) at position 34 (anticodon wobble position) in tRNAs with GU(N) anticodons (tRNA-Asp, -Asn, -His and -Tyr). Catalysis occurs through a double-displacement mechanism. The nucleophile active site attacks the C1' of nucleotide 34 to detach the guanine base from the RNA, forming a covalent enzyme-RNA intermediate. The proton acceptor active site deprotonates the incoming PreQ1, allowing a nucleophilic attack on the C1' of the ribose to form the product. After dissociation, two additional enzymatic reactions on the tRNA convert PreQ1 to queuine (Q), resulting in the hypermodified nucleoside queuosine (7-(((4,5-cis-dihydroxy-2-cyclopenten-1-yl)amino)methyl)-7-deazaguanosine). The sequence is that of Queuine tRNA-ribosyltransferase from Chlamydia muridarum (strain MoPn / Nigg).